The primary structure comprises 147 residues: Protein-export protein SecB 2 (147 aa).

This sequence belongs to the SecB family. As to quaternary structure, homotetramer, a dimer of dimers. One homotetramer interacts with 1 SecA dimer.

Its subcellular location is the cytoplasm. One of the proteins required for the normal export of preproteins out of the cell cytoplasm. It is a molecular chaperone that binds to a subset of precursor proteins, maintaining them in a translocation-competent state. It also specifically binds to its receptor SecA. The sequence is that of Protein-export protein SecB 2 from Francisella tularensis subsp. holarctica (strain FTNF002-00 / FTA).